The primary structure comprises 816 residues: Two pore channel protein 1 (816 aa).

The Cytoplasmic portion of the chain corresponds to 1–112; sequence MAVSLDDDVP…AHNHLFYLME (112 aa). Residues 17–64 form a disordered region; that stretch reads EGGSAPLAPSNGLGQEELPSKNGGSYAIHDSQAPSLSSGGESSPSSPA. Low complexity predominate over residues 50-63; it reads PSLSSGGESSPSSP. Residues 113–133 form a helical membrane-spanning segment; the sequence is LATALLLLLLSLCEAPAVPAL. R134 is a topological domain (extracellular). A helical membrane pass occupies residues 135–155; that stretch reads LGIYVHATLELFALMVVVFEL. The Cytoplasmic segment spans residues 156–177; that stretch reads CMKLRWLGLHTFIRHKRTMVKT. A helical membrane pass occupies residues 178–198; that stretch reads SVLVVQFVEAIVVLVRQMSHV. Residues 199-200 lie on the Extracellular side of the membrane; sequence RV. Residues 201 to 220 form a helical membrane-spanning segment; it reads TRALRCIFLVDCRYCGGVRR. The Cytoplasmic portion of the chain corresponds to 221-234; sequence NLRQIFQSLPPFMD. The helical transmembrane segment at 235 to 255 threads the bilayer; that stretch reads ILLLLLFFMIIFAILGFYLFS. Residues 256–262 are Extracellular-facing; the sequence is PNPSDPY. The helical; Pore-forming intramembrane region spans 263–286; sequence FSTLENSIVSLFVLLTTANFPDVM. The Extracellular portion of the chain corresponds to 287-294; it reads MPSYSRNP. The helical transmembrane segment at 295–315 threads the bilayer; it reads WSCVFFIVYLSIELYFIMNLL. The Cytoplasmic segment spans residues 316-444; sequence LAVVFDTFND…NILVKSKAFQ (129 aa). A helical membrane pass occupies residues 445 to 465; that stretch reads YFMYLVVAVNGVWILVETFML. The Extracellular portion of the chain corresponds to 466-479; the sequence is KGGNFFSKHVPWSY. Residues 480–500 form a helical membrane-spanning segment; it reads LVFLTIYGVELFLKVAGLGPV. The Cytoplasmic portion of the chain corresponds to 501–503; the sequence is EYL. A helical transmembrane segment spans residues 504–526; sequence SSGWNLFDFSVTVFAFLGLLALA. At 527–534 the chain is on the extracellular side; that stretch reads LNMEPFYF. A helical membrane pass occupies residues 535–549; that stretch reads IVVLRPLQLLRLFKL. The Cytoplasmic segment spans residues 550–573; sequence KERYRNVLDTMFELLPRMASLGLT. Residues 574-594 traverse the membrane as a helical segment; it reads LLIFYYSFAIVGMEFFCGIVF. The Extracellular segment spans residues 595–629; sequence PNCCNTSTVADAYRWRNHTVGNRTVVEEGYYYLNN. Residues N599, N611, and N616 are each glycosylated (N-linked (GlcNAc...) asparagine). An intramembrane region (helical; Pore-forming) is located at residues 630 to 653; that stretch reads FDNILNSFVTLFELTVVNNWYIIM. Over 654–670 the chain is Extracellular; the sequence is EGVTSQTSHWSRLYFMT. A helical transmembrane segment spans residues 671–691; the sequence is FYIVTMVVMTIIVAFILEAFV. Topologically, residues 692–816 are cytoplasmic; sequence FRMNYSRKNQ…GSRQRSQTVT (125 aa). The stretch at 769–796 forms a coiled coil; sequence SLKMYQEEIQEWYEEHAREQEQQRQLSS. Residues 782–816 form a disordered region; the sequence is EEHAREQEQQRQLSSSAAPAAQQPPGSRQRSQTVT. Residues 791-816 show a composition bias toward low complexity; it reads QRQLSSSAAPAAQQPPGSRQRSQTVT.

It belongs to the calcium channel alpha-1 subunit (TC 1.A.1.11) family. Two pore calcium channel subfamily. As to quaternary structure, dimer. Interacts with MTOR; the interaction is required for TPCN1 ATP sensitivity. Interacts with STX7, STX8 and STX12. Interacts with JPT2. Found in a complex with LSM12, TPCN1 and TPCN2. Post-translationally, N-glycosylated. Highest expression found in the heart and kidney, and lowest expression found in the spleen.

The protein localises to the lysosome membrane. The protein resides in the endosome membrane. Its subcellular location is the early endosome membrane. It is found in the recycling endosome membrane. The enzyme catalyses Na(+)(in) = Na(+)(out). It carries out the reaction Ca(2+)(in) = Ca(2+)(out). Na(+) current is inhibited by ATP in a MTORC-dependent manner. ATP sensitivity is independent of PI(3,5)P2. Probably regulated by Mg(2+) ions, cytosolic Mg(2+) selectively inhibits outward current while lysosomal Mg(2+) modestly inhibits both the outward and inward currents. In the absence of Mg(2+), NAADP readily activates TPCN2, with properties similar to PI(3,5)P2. Both current elicited by PI(3,5)P2 as well as NAADP are inhibited by tetrandrine. Intracellular channel initially characterized as a non-selective Ca(2+)-permeable channel activated by NAADP (nicotinic acid adenine dinucleotide phosphate), it is also a voltage-gated highly-selective Na(+) channel activated directly by PI(3,5)P2 (phosphatidylinositol 3,5-bisphosphate) that senses pH changes and confers electrical excitability to organelles. Localizes to the early and recycling endosomes membranes where it plays a role in the uptake and processing of proteins and regulates organellar membrane excitability, membrane trafficking and pH homeostasis. Ion selectivity is not fixed but rather agonist-dependent and under defined ionic conditions, can be readily activated by both NAADP and PI(3,5)P2. Required for mTOR-dependent nutrient sensing. Its function is as follows. (Microbial infection) During Ebola virus (EBOV) infection, controls the movement of endosomes containing virus particles and is required by EBOV to escape from the endosomal network into the cell cytoplasm. This is Two pore channel protein 1 from Homo sapiens (Human).